Here is a 129-residue protein sequence, read N- to C-terminus: Small ribosomal subunit protein uS11 (129 aa).

This sequence belongs to the universal ribosomal protein uS11 family. As to quaternary structure, part of the 30S ribosomal subunit. Interacts with proteins S7 and S18. Binds to IF-3.

Located on the platform of the 30S subunit, it bridges several disparate RNA helices of the 16S rRNA. Forms part of the Shine-Dalgarno cleft in the 70S ribosome. This chain is Small ribosomal subunit protein uS11, found in Stenotrophomonas maltophilia (strain R551-3).